The following is a 470-amino-acid chain: 6-phospho-beta-galactosidase 1 (470 aa).

D-galactose 6-phosphate contacts are provided by Gln23, His120, Asn163, Glu164, and Asn300. Residue Glu164 is the Proton donor of the active site. Glu378 (nucleophile) is an active-site residue. D-galactose 6-phosphate is bound by residues Ser434, Trp435, Lys441, and Tyr443.

It belongs to the glycosyl hydrolase 1 family.

It catalyses the reaction a 6-phospho-beta-D-galactoside + H2O = D-galactose 6-phosphate + an alcohol. The protein operates within carbohydrate metabolism; lactose degradation; D-galactose 6-phosphate and beta-D-glucose from lactose 6-phosphate: step 1/1. This Streptococcus pneumoniae (strain ATCC BAA-255 / R6) protein is 6-phospho-beta-galactosidase 1.